Reading from the N-terminus, the 132-residue chain is Small ribosomal subunit protein eS24 (132 aa).

Positions 90-100 (RLAKHGLYEKK) are enriched in basic and acidic residues. The disordered stretch occupies residues 90 to 132 (RLAKHGLYEKKKTSRKQRKERKNRMKKVRGTAKANVGAGKKKD). The segment covering 101 to 119 (KTSRKQRKERKNRMKKVRG) has biased composition (basic residues).

The protein belongs to the eukaryotic ribosomal protein eS24 family. As to quaternary structure, component of the small ribosomal subunit. Part of the small subunit (SSU) processome, composed of more than 70 proteins and the RNA chaperone small nucleolar RNA (snoRNA) U3.

Its subcellular location is the cytoplasm. The protein resides in the nucleus. It is found in the nucleolus. Its function is as follows. Component of the small ribosomal subunit. The ribosome is a large ribonucleoprotein complex responsible for the synthesis of proteins in the cell. Required for processing of pre-rRNA and maturation of 40S ribosomal subunits. Part of the small subunit (SSU) processome, first precursor of the small eukaryotic ribosomal subunit. During the assembly of the SSU processome in the nucleolus, many ribosome biogenesis factors, an RNA chaperone and ribosomal proteins associate with the nascent pre-rRNA and work in concert to generate RNA folding, modifications, rearrangements and cleavage as well as targeted degradation of pre-ribosomal RNA by the RNA exosome. The sequence is that of Small ribosomal subunit protein eS24 (rps24) from Xenopus laevis (African clawed frog).